A 152-amino-acid chain; its full sequence is Superoxide dismutase [Cu-Zn] 4A (152 aa).

Residues His-45, His-47, and His-62 each coordinate Cu cation. A disulfide bridge links Cys-56 with Cys-145. Zn(2+)-binding residues include His-62, His-70, His-79, and Asp-82. His-119 contacts Cu cation.

It belongs to the Cu-Zn superoxide dismutase family. As to quaternary structure, homodimer. Requires Cu cation as cofactor. The cofactor is Zn(2+).

The protein localises to the cytoplasm. It catalyses the reaction 2 superoxide + 2 H(+) = H2O2 + O2. Destroys radicals which are normally produced within the cells and which are toxic to biological systems. The sequence is that of Superoxide dismutase [Cu-Zn] 4A (SODCC.3) from Zea mays (Maize).